Reading from the N-terminus, the 29-residue chain is Protein YldA (29 aa).

Residues 5–25 (FYILIGFLIMAAIIVMAVLYL) traverse the membrane as a helical segment.

It is found in the cell inner membrane. This chain is Protein YldA, found in Escherichia coli (strain K12).